The following is a 521-amino-acid chain: Tubulin-specific chaperone E (521 aa).

A CAP-Gly domain is found at 24–68 (GPVPPTAGVWLGVEWDHPERGKHDGSHDGVRYFTCRHPTGGSFVR). 7 LRR repeats span residues 147–168 (FVQS…AAIT), 173–194 (SLQE…SSLS), 199–220 (HLRV…HCAP), 224–245 (QVEE…EHVL), 247–268 (ALTV…EISH), 271–292 (RLER…DVPA), and 301–322 (ALKE…NELE). The 43-residue stretch at 335-377 (NPLLHKEKNLETARQIMIARLGQLELLDMRQILSDERRGAELD) folds into the LRRCT domain.

Belongs to the TBCE family. Supercomplex made of cofactors A to E. Cofactors A and D function by capturing and stabilizing tubulin in a quasi-native conformation. Cofactor E binds to the cofactor D-tubulin complex; interaction with cofactor C then causes the release of tubulin polypeptides that are committed to the native state.

The protein localises to the cytoplasm. Its subcellular location is the cytoskeleton. Functionally, tubulin-folding protein; involved in the second step of the tubulin folding pathway. The sequence is that of Tubulin-specific chaperone E (tbce) from Danio rerio (Zebrafish).